The chain runs to 730 residues: GTPase-activating protein GYP7 (730 aa).

The 186-residue stretch at 434–619 folds into the Rab-GAP TBC domain; the sequence is VQEDKERDDF…RLWEVLWTDY (186 aa).

Its function is as follows. Most effectively accelerate the intrinsic GTPase activity of YPT7. It is also active, but to a lesser extent, on YPT31, YPT32 and YPT1. YPT6 and SEC4. The protein is GTPase-activating protein GYP7 (GYP7) of Yarrowia lipolytica (strain CLIB 122 / E 150) (Yeast).